A 338-amino-acid polypeptide reads, in one-letter code: Mas-related G-protein coupled receptor member B2 (338 aa).

Topologically, residues 1 to 40 (MSGDFLIKNLSTSAWKTNITVLNGSYYIDTSVCVTRNQAM) are extracellular. N-linked (GlcNAc...) asparagine glycans are attached at residues Asn9, Asn18, and Asn23. Residues 41-61 (ILLSIIISLVGMGLNAIVLWF) form a helical membrane-spanning segment. The Cytoplasmic segment spans residues 62–89 (LGIRMHTNAFTVYILNLAMADFLYLCSQ). The chain crosses the membrane as a helical span at residues 90 to 110 (FVICLLIAFYIFYSIDINIPL). Residue Val111 is a topological domain, extracellular. Residues 112–132 (LYVVPIFAYLSGLSILSTISI) traverse the membrane as a helical segment. Topologically, residues 133–157 (ERCLSVIWPIWYRCKRPRHTSAITC) are cytoplasmic. Residues 158–178 (FVLWVMSLLLGLLEGKACGLL) form a helical membrane-spanning segment. At 179 to 191 (FNSFDSYWCETFD) the chain is on the extracellular side. Residues 192–212 (VITNIWSVVFFGVLCGSSLTL) traverse the membrane as a helical segment. At 213–231 (LVRIFCGSQRIPMTRLYVT) the chain is on the cytoplasmic side. A helical transmembrane segment spans residues 232 to 252 (ITLTVLVFLIFGLPFGIYWIL). The Extracellular segment spans residues 253 to 268 (YQWISNFYYVEICNFY). The chain crosses the membrane as a helical span at residues 269–289 (LEILFLSCVNSCMNPIIYFLV). Topologically, residues 290 to 338 (GSIRHRRFRRKTLKLLLQRAMQDTPEEEQSGNKSSSEHPEELETVQSCS) are cytoplasmic. Positions 310-338 (MQDTPEEEQSGNKSSSEHPEELETVQSCS) are disordered.

This sequence belongs to the G-protein coupled receptor 1 family. Mas subfamily. In terms of tissue distribution, mast cell-specific.

It localises to the cell membrane. In terms of biological role, mast cell-specific receptor for basic secretagogues, i.e. cationic amphiphilic drugs, as well as endo- or exogenous peptides, consisting of a basic head group and a hydrophobic core. Recognizes and binds small molecules containing a cyclized tetrahydroisoquinoline (THIQ), such as non-steroidal neuromuscular blocking drugs (NMBDs), including tubocurarine and atracurium. In response to these compounds, mediates pseudo-allergic reactions characterized by histamine release, inflammation and airway contraction. The chain is Mas-related G-protein coupled receptor member B2 (Mrgprb2) from Mus musculus (Mouse).